Consider the following 674-residue polypeptide: Probable copper-transporting P-type ATPase B (674 aa).

The segment at 1–22 (MNHSNQMHHDNHESHNHHSGHA) is disordered. The segment covering 7–16 (MHHDNHESHN) has biased composition (basic and acidic residues). 6 helical membrane passes run 32 to 52 (FFVS…MGVN), 57 to 77 (FTFP…FFYG), 95 to 115 (GMMT…LYAF), 127 to 147 (TMDF…GHWI), 284 to 304 (GYLF…WMLI), and 315 to 335 (LVTV…PLVT). Asp367 serves as the catalytic 4-aspartylphosphate intermediate. The Mg(2+) site is built by Asp565 and Asp569. 2 consecutive transmembrane segments (helical) span residues 623–645 (LWWG…AFIG) and 649–671 (SPAI…AFTL).

It belongs to the cation transport ATPase (P-type) (TC 3.A.3) family. Type IB subfamily.

It is found in the cell membrane. It catalyses the reaction Cu(+)(in) + ATP + H2O = Cu(+)(out) + ADP + phosphate + H(+). Involved in copper transport. This is Probable copper-transporting P-type ATPase B (copB) from Staphylococcus epidermidis (strain ATCC 35984 / DSM 28319 / BCRC 17069 / CCUG 31568 / BM 3577 / RP62A).